Reading from the N-terminus, the 365-residue chain is Chorismate synthase (365 aa).

Arg-48 serves as a coordination point for NADP(+). FMN contacts are provided by residues 125-127 (RGS), Gly-286, 301-305 (KPTPS), and Arg-328.

Belongs to the chorismate synthase family. FMNH2 is required as a cofactor.

The enzyme catalyses 5-O-(1-carboxyvinyl)-3-phosphoshikimate = chorismate + phosphate. Its pathway is metabolic intermediate biosynthesis; chorismate biosynthesis; chorismate from D-erythrose 4-phosphate and phosphoenolpyruvate: step 7/7. Its function is as follows. Catalyzes the anti-1,4-elimination of the C-3 phosphate and the C-6 proR hydrogen from 5-enolpyruvylshikimate-3-phosphate (EPSP) to yield chorismate, which is the branch point compound that serves as the starting substrate for the three terminal pathways of aromatic amino acid biosynthesis. This reaction introduces a second double bond into the aromatic ring system. The sequence is that of Chorismate synthase from Methanosphaera stadtmanae (strain ATCC 43021 / DSM 3091 / JCM 11832 / MCB-3).